Reading from the N-terminus, the 144-residue chain is Transcription antitermination protein NusB (144 aa).

It belongs to the NusB family.

In terms of biological role, involved in transcription antitermination. Required for transcription of ribosomal RNA (rRNA) genes. Binds specifically to the boxA antiterminator sequence of the ribosomal RNA (rrn) operons. The protein is Transcription antitermination protein NusB of Histophilus somni (strain 2336) (Haemophilus somnus).